We begin with the raw amino-acid sequence, 177 residues long: MASPRTVTVVALSVALGLFFVFMGTIKLTPRLSKDAYSEMKRAYKSYVRALPLLKKMGINSILLRKSIGALEVACGIVMTLVPGRPKDVANFFLLLLVLAVLFFHQLVGDPLKRYAHALVFGILLTCRLLIARKPEDRSSEKKSSPPGNAGSDGNAGNTEEQPSLYEKAPQGKMKLS.

Topologically, residues 1–5 (MASPR) are cytoplasmic. A helical membrane pass occupies residues 6 to 26 (TVTVVALSVALGLFFVFMGTI). Topologically, residues 27 to 61 (KLTPRLSKDAYSEMKRAYKSYVRALPLLKKMGINS) are lumenal. Residues 43-54 (AYKSYVRALPLL) form an interaction with NGFR region. Residues 62 to 82 (ILLRKSIGALEVACGIVMTLV) traverse the membrane as a helical segment. At 83 to 88 (PGRPKD) the chain is on the cytoplasmic side. The helical transmembrane segment at 89–109 (VANFFLLLLVLAVLFFHQLVG) threads the bilayer. Topologically, residues 110–114 (DPLKR) are lumenal. Residues 115–132 (YAHALVFGILLTCRLLIA) traverse the membrane as a helical segment. Residues 133-177 (RKPEDRSSEKKSSPPGNAGSDGNAGNTEEQPSLYEKAPQGKMKLS) are Cytoplasmic-facing. Residues 136 to 177 (EDRSSEKKSSPPGNAGSDGNAGNTEEQPSLYEKAPQGKMKLS) are disordered.

The protein belongs to the DoxX family. May interact with NGFR. Interacts with RPN1, RPN2 and CANX.

The protein resides in the peroxisome membrane. The protein localises to the cytoplasmic vesicle. It localises to the endoplasmic reticulum membrane. In terms of biological role, molecular chaperone which mediates the proper assembly and functional expression of the nicotinic acetylcholine receptors (nAChRs) throughout the brain. Essential for the proper folding, assembly, function and surface trafficking of alpha-7 (CHRNA7), alpha-4-beta-2, alpha-3-beta-2 and alpha-3-beta-4 receptors. Stably associates with ribophorin-1 (RPN1) and ribophorin-2 (RPN2) (components of the oligosaccharyl transferase (OST) complex) and with calnexin (CANX), both of which are critical for NACHO-mediated effects on CHRNA7 assembly and function. Facilitates the proper folding and assembly of alpha-6-beta-2 and alpha-6-beta-2-beta-3 receptors and acts at early stages of the nAChRs subunit assembly. Promotes the expression of the alpha-4(2):beta-2(3) stoichiometric form over the alpha-4(3):beta-2(2) form. The chain is Novel acetylcholine receptor chaperone (TMEM35A) from Bos taurus (Bovine).